The following is a 298-amino-acid chain: Ribosomal RNA small subunit methyltransferase H (298 aa).

S-adenosyl-L-methionine contacts are provided by residues 31-33, Asp-50, Tyr-80, Asp-95, and Gln-102; that span reads GGH. Residues 255-298 are disordered; that stretch reads AEKDLYGNTNKPFKSVGKAIDPDDEEKERNNRARSARLRIAERE.

The protein belongs to the methyltransferase superfamily. RsmH family.

Its subcellular location is the cytoplasm. It carries out the reaction cytidine(1402) in 16S rRNA + S-adenosyl-L-methionine = N(4)-methylcytidine(1402) in 16S rRNA + S-adenosyl-L-homocysteine + H(+). In terms of biological role, specifically methylates the N4 position of cytidine in position 1402 (C1402) of 16S rRNA. The sequence is that of Ribosomal RNA small subunit methyltransferase H from Cytophaga hutchinsonii (strain ATCC 33406 / DSM 1761 / CIP 103989 / NBRC 15051 / NCIMB 9469 / D465).